A 507-amino-acid polypeptide reads, in one-letter code: Desmethyl-deoxy-podophyllotoxin synthase (507 aa).

Residues 1 to 21 traverse the membrane as a helical segment; sequence MEFLSFPLSSALLIILLFMLV. C440 is a heme binding site.

It belongs to the cytochrome P450 family. It depends on heme as a cofactor. In terms of tissue distribution, rhizome-specific expression.

Its subcellular location is the membrane. It catalyses the reaction (-)-deoxypodophyllotoxin + reduced [NADPH--hemoprotein reductase] + O2 = (-)-4'-desmethyl-deoxypodophyllotoxin + formaldehyde + oxidized [NADPH--hemoprotein reductase] + H2O + H(+). It participates in aromatic compound metabolism; phenylpropanoid biosynthesis. Cytochrome P450 involved in the biosynthesis of etoposide, a chemotherapeutic compound of the topoisomerase inhibitor family. Catalyzes the conversion of deoxypodophyllotoxin to desmethyl-deoxypodophyllotoxin. This Sinopodophyllum hexandrum (Himalayan may apple) protein is Desmethyl-deoxy-podophyllotoxin synthase.